A 275-amino-acid polypeptide reads, in one-letter code: 2,3,4,5-tetrahydropyridine-2,6-dicarboxylate N-succinyltransferase (275 aa).

Substrate contacts are provided by Arg104 and Asp141.

The protein belongs to the transferase hexapeptide repeat family. Homotrimer.

It is found in the cytoplasm. The catalysed reaction is (S)-2,3,4,5-tetrahydrodipicolinate + succinyl-CoA + H2O = (S)-2-succinylamino-6-oxoheptanedioate + CoA. It functions in the pathway amino-acid biosynthesis; L-lysine biosynthesis via DAP pathway; LL-2,6-diaminopimelate from (S)-tetrahydrodipicolinate (succinylase route): step 1/3. The polypeptide is 2,3,4,5-tetrahydropyridine-2,6-dicarboxylate N-succinyltransferase (Haemophilus influenzae (strain PittEE)).